A 173-amino-acid polypeptide reads, in one-letter code: Protein MOTHER of FT and TFL1 (173 aa).

Ala2 is subject to N-acetylalanine.

Belongs to the phosphatidylethanolamine-binding protein family. Expressed in gametophytes and developing seeds.

The protein localises to the cytoplasm. May form complexes with phosphorylated ligands by interfering with kinases and their effectors. Regulates seed germination via the abscisic acid (ABA) and gibberellic acid (GA)signaling pathways. During seed germination, MFT expression is directly repressed by ABI3 or promoted by ABI5 in the ABA signaling pathway. Involved in a negative feedback regulation of ABA signaling. Promotes embryo growth by direct repression of ABI5. In the GA signaling pathway, MFT expression is promoted by the DELLA protein RGL2 during seed germination. May regulate seed germination and fertility through the brassinosteroid (BR) signaling pathway. The sequence is that of Protein MOTHER of FT and TFL1 (MFT) from Arabidopsis thaliana (Mouse-ear cress).